Here is a 240-residue protein sequence, read N- to C-terminus: DNA repair protein RecO (240 aa).

The protein belongs to the RecO family.

Involved in DNA repair and RecF pathway recombination. In Wolbachia pipientis wMel, this protein is DNA repair protein RecO.